A 105-amino-acid chain; its full sequence is Early nodulin-93 (105 aa).

A helical membrane pass occupies residues 66-83 (TAQALIISTATAAAYFIV).

Its subcellular location is the membrane. In Glycine max (Soybean), this protein is Early nodulin-93.